We begin with the raw amino-acid sequence, 722 residues long: Golgin subfamily A member 5 (722 aa).

At 1–689 the chain is on the cytoplasmic side; it reads MSWFTDLAGR…IFLRRYPIAR (689 aa). Disordered regions lie at residues 90-158 and 194-215; these read TRSS…VKPI and TLSD…SHEL. The segment covering 91 to 109 has biased composition (low complexity); that stretch reads RSSIESSHNSSVNVSSHRS. Residues 134 to 148 are compositionally biased toward basic and acidic residues; sequence DKVHSSSQKETRKES. Residues 149-158 are compositionally biased toward polar residues; the sequence is ASVNQAVKPI. Over residues 195–209 the composition is skewed to low complexity; that stretch reads LSDSGSSASLSTTGD. A coiled-coil region spans residues 211-622; sequence KSHELSNLRL…LEHQLKNVQG (412 aa). A helical; Anchor for type IV membrane protein membrane pass occupies residues 690-710; the sequence is VFIIIYMALLHLWVMIVLLTY. Residues 711 to 722 lie on the Lumenal side of the membrane; sequence TPEMHHDTPSGK.

The protein localises to the golgi apparatus membrane. Functionally, involved in maintaining Golgi structure. Stimulates the formation of Golgi stacks and ribbons. Involved in intra-Golgi retrograde transport. This Xenopus laevis (African clawed frog) protein is Golgin subfamily A member 5 (golga5).